Here is a 342-residue protein sequence, read N- to C-terminus: tRNA dimethylallyltransferase (342 aa).

Residue 39–46 (GPTGSGKT) coordinates ATP. 41-46 (TGSGKT) contributes to the substrate binding site. Positions 64 to 67 (DSMQ) are interaction with substrate tRNA.

The protein belongs to the IPP transferase family. Monomer. The cofactor is Mg(2+).

The catalysed reaction is adenosine(37) in tRNA + dimethylallyl diphosphate = N(6)-dimethylallyladenosine(37) in tRNA + diphosphate. In terms of biological role, catalyzes the transfer of a dimethylallyl group onto the adenine at position 37 in tRNAs that read codons beginning with uridine, leading to the formation of N6-(dimethylallyl)adenosine (i(6)A). The protein is tRNA dimethylallyltransferase of Chlamydia felis (strain Fe/C-56) (Chlamydophila felis).